A 125-amino-acid polypeptide reads, in one-letter code: uncharacterized protein (125 aa).

This is an uncharacterized protein from Dictyostelium discoideum (Social amoeba).